A 209-amino-acid chain; its full sequence is Probable nicotinate-nucleotide adenylyltransferase (209 aa).

Belongs to the NadD family.

The catalysed reaction is nicotinate beta-D-ribonucleotide + ATP + H(+) = deamido-NAD(+) + diphosphate. The protein operates within cofactor biosynthesis; NAD(+) biosynthesis; deamido-NAD(+) from nicotinate D-ribonucleotide: step 1/1. Catalyzes the reversible adenylation of nicotinate mononucleotide (NaMN) to nicotinic acid adenine dinucleotide (NaAD). The sequence is that of Probable nicotinate-nucleotide adenylyltransferase from Hydrogenovibrio crunogenus (strain DSM 25203 / XCL-2) (Thiomicrospira crunogena).